A 478-amino-acid chain; its full sequence is Aspartate ammonia-lyase (478 aa).

L-aspartate is bound by residues threonine 104, serine 143, threonine 144, asparagine 145, and threonine 190. The interval 320–329 (GSSIMPAKVN) is SS loop. Serine 321 acts as the Proton acceptor in catalysis. L-aspartate-binding residues include serine 322 and lysine 327.

It belongs to the class-II fumarase/aspartase family. Aspartase subfamily. Homotetramer.

The catalysed reaction is L-aspartate = fumarate + NH4(+). Its function is as follows. Catalyzes the reversible conversion of L-aspartate to fumarate and ammonia. This chain is Aspartate ammonia-lyase (aspA), found in Escherichia coli O157:H7.